A 112-amino-acid chain; its full sequence is MEAKAVARYIRISPRRVRQVIDLIRGKGVREAEAILMVTPKRGSRVVAKVLKSAVANAEHNYDLDASNLVVSRAYVDEGPTLKRYQPRAMGRANIRRKRTSHITVVVGEKED.

It belongs to the universal ribosomal protein uL22 family. In terms of assembly, part of the 50S ribosomal subunit.

In terms of biological role, this protein binds specifically to 23S rRNA; its binding is stimulated by other ribosomal proteins, e.g. L4, L17, and L20. It is important during the early stages of 50S assembly. It makes multiple contacts with different domains of the 23S rRNA in the assembled 50S subunit and ribosome. Functionally, the globular domain of the protein is located near the polypeptide exit tunnel on the outside of the subunit, while an extended beta-hairpin is found that lines the wall of the exit tunnel in the center of the 70S ribosome. This is Large ribosomal subunit protein uL22 from Moorella thermoacetica (strain ATCC 39073 / JCM 9320).